Reading from the N-terminus, the 184-residue chain is Shikimate kinase (184 aa).

17-22 (GAGKTT) provides a ligand contact to ATP. T21 contacts Mg(2+). Substrate is bound by residues D39, R63, and G85. R123 serves as a coordination point for ATP. A substrate-binding site is contributed by R142.

It belongs to the shikimate kinase family. Monomer. Mg(2+) serves as cofactor.

The protein localises to the cytoplasm. The enzyme catalyses shikimate + ATP = 3-phosphoshikimate + ADP + H(+). Its pathway is metabolic intermediate biosynthesis; chorismate biosynthesis; chorismate from D-erythrose 4-phosphate and phosphoenolpyruvate: step 5/7. In terms of biological role, catalyzes the specific phosphorylation of the 3-hydroxyl group of shikimic acid using ATP as a cosubstrate. The chain is Shikimate kinase from Burkholderia thailandensis (strain ATCC 700388 / DSM 13276 / CCUG 48851 / CIP 106301 / E264).